Here is a 318-residue protein sequence, read N- to C-terminus: Bis(5'-nucleosyl)-tetraphosphatase, symmetrical (318 aa).

The interval 269-318 (PGREVTGPAPVARAPRRPRERLGRQRSRGNRGNAGNTAVPAKPPVDTPQD) is disordered. The span at 282 to 297 (APRRPRERLGRQRSRG) shows a compositional bias: basic residues. The span at 309–318 (AKPPVDTPQD) shows a compositional bias: pro residues.

Belongs to the Ap4A hydrolase family.

The enzyme catalyses P(1),P(4)-bis(5'-adenosyl) tetraphosphate + H2O = 2 ADP + 2 H(+). Hydrolyzes diadenosine 5',5'''-P1,P4-tetraphosphate to yield ADP. In Xanthomonas oryzae pv. oryzae (strain MAFF 311018), this protein is Bis(5'-nucleosyl)-tetraphosphatase, symmetrical.